The chain runs to 364 residues: UDP-N-acetylenolpyruvoylglucosamine reductase (364 aa).

One can recognise an FAD-binding PCMH-type domain in the interval 30–196 (LGGPATRLIT…LRVRFELEDA (167 aa)). R173 is an active-site residue. S252 acts as the Proton donor in catalysis. Residue E356 is part of the active site.

The protein belongs to the MurB family. The cofactor is FAD.

It is found in the cytoplasm. It catalyses the reaction UDP-N-acetyl-alpha-D-muramate + NADP(+) = UDP-N-acetyl-3-O-(1-carboxyvinyl)-alpha-D-glucosamine + NADPH + H(+). The protein operates within cell wall biogenesis; peptidoglycan biosynthesis. Functionally, cell wall formation. This is UDP-N-acetylenolpyruvoylglucosamine reductase from Streptomyces avermitilis (strain ATCC 31267 / DSM 46492 / JCM 5070 / NBRC 14893 / NCIMB 12804 / NRRL 8165 / MA-4680).